The primary structure comprises 180 residues: Large ribosomal subunit protein uL5 (180 aa).

The protein belongs to the universal ribosomal protein uL5 family. As to quaternary structure, part of the 50S ribosomal subunit; part of the 5S rRNA/L5/L18/L25 subcomplex. Contacts the 5S rRNA and the P site tRNA. Forms a bridge to the 30S subunit in the 70S ribosome.

In terms of biological role, this is one of the proteins that bind and probably mediate the attachment of the 5S RNA into the large ribosomal subunit, where it forms part of the central protuberance. In the 70S ribosome it contacts protein S13 of the 30S subunit (bridge B1b), connecting the 2 subunits; this bridge is implicated in subunit movement. Contacts the P site tRNA; the 5S rRNA and some of its associated proteins might help stabilize positioning of ribosome-bound tRNAs. The chain is Large ribosomal subunit protein uL5 from Streptococcus mutans serotype c (strain ATCC 700610 / UA159).